The chain runs to 354 residues: Phosphoribosylformylglycinamidine cyclo-ligase (354 aa).

This sequence belongs to the AIR synthase family.

The protein resides in the cytoplasm. It carries out the reaction 2-formamido-N(1)-(5-O-phospho-beta-D-ribosyl)acetamidine + ATP = 5-amino-1-(5-phospho-beta-D-ribosyl)imidazole + ADP + phosphate + H(+). Its pathway is purine metabolism; IMP biosynthesis via de novo pathway; 5-amino-1-(5-phospho-D-ribosyl)imidazole from N(2)-formyl-N(1)-(5-phospho-D-ribosyl)glycinamide: step 2/2. The protein is Phosphoribosylformylglycinamidine cyclo-ligase of Synechococcus sp. (strain JA-2-3B'a(2-13)) (Cyanobacteria bacterium Yellowstone B-Prime).